The primary structure comprises 774 residues: FT-interacting protein 7 (774 aa).

The span at 1-17 shows a compositional bias: basic and acidic residues; the sequence is MMQRPFRPEEYSLKETS. Positions 1–25 are disordered; that stretch reads MMQRPFRPEEYSLKETSPHLGGGAA. 3 C2 domains span residues 23-143, 182-305, and 346-472; these read GAAG…PQWY, IPGD…SQWY, and YSSD…THAY. Ca(2+)-binding residues include aspartate 56, aspartate 62, aspartate 109, aspartate 111, and aspartate 116. 3 consecutive transmembrane segments (helical) span residues 575–595, 606–626, and 714–734; these read IMGV…ICHW, ILFV…FLYL, and ATAL…VTPF.

This sequence belongs to the MCTP family. As to quaternary structure, interacts with OSH1. Requires Ca(2+) as cofactor. Expressed in roots, stems, lemma, palea, pistils and ovules. Expressed at low levels in leaves.

It localises to the cell membrane. Its function is as follows. Promotes nuclear translocation of the transcription factor OSH1, which directly suppresses the auxin biosynthetic gene YUCCA4 during the late development of anthers. Reduction of auxin levels at late stage of anther development, after meiosis of microspore mother cells, is necessary for normal anther dehiscence and seed setting. Required for jasmonate (JA) biosynthetic genes expression and JA production in anthers. The polypeptide is FT-interacting protein 7 (Oryza sativa subsp. japonica (Rice)).